The chain runs to 236 residues: Ribose-5-phosphate isomerase A (236 aa).

Residues 33–36, 90–93, and 103–106 contribute to the substrate site; these read TGST, DGAD, and KGGG. Glu112 (proton acceptor) is an active-site residue. Lys130 contacts substrate.

The protein belongs to the ribose 5-phosphate isomerase family. In terms of assembly, homodimer.

The catalysed reaction is aldehydo-D-ribose 5-phosphate = D-ribulose 5-phosphate. It participates in carbohydrate degradation; pentose phosphate pathway; D-ribose 5-phosphate from D-ribulose 5-phosphate (non-oxidative stage): step 1/1. Its function is as follows. Catalyzes the reversible conversion of ribose-5-phosphate to ribulose 5-phosphate. The polypeptide is Ribose-5-phosphate isomerase A (Trichormus variabilis (strain ATCC 29413 / PCC 7937) (Anabaena variabilis)).